Consider the following 237-residue polypeptide: Sugar fermentation stimulation protein homolog (237 aa).

The protein belongs to the SfsA family.

This chain is Sugar fermentation stimulation protein homolog, found in Pseudomonas fluorescens (strain ATCC BAA-477 / NRRL B-23932 / Pf-5).